The chain runs to 985 residues: Coiled-coil domain-containing protein 33 (985 aa).

The tract at residues 228 to 263 (MSPFSTDSDQEGLSWEAGPWQHPAQVPEEPQGRLDT) is disordered. The 136-residue stretch at 263–398 (TSQDPYPAAN…VFLRGVNEPL (136 aa)) folds into the C2 domain. Residues 599–745 (VEMNNYRRAM…LEERLCERKE (147 aa)) are a coiled coil. Positions 821–842 (AERLQDTNGPGHPKSTETLPAQ) are disordered. The stretch at 885 to 928 (DKFNLLAKLEQAQSRILSLENQLEESARHWAREKQNLAIRLQEQ) forms a coiled coil. The segment at 931–985 (GFGQPPNSIIIDQPNAGASKNPQQLSKLEPSLPSSDKKLNRPSDSQIEISNNQKT) is disordered. 2 stretches are compositionally biased toward polar residues: residues 946–956 (AGASKNPQQLS) and 972–985 (PSDSQIEISNNQKT).

The polypeptide is Coiled-coil domain-containing protein 33 (Ccdc33) (Mus musculus (Mouse)).